The primary structure comprises 967 residues: Dolichyl-phosphooligosaccharide-protein glycotransferase 1 (967 aa).

Residues 1-21 (MVKTQIKEKKKDEKVTIPLPG) lie on the Cytoplasmic side of the membrane. The helical transmembrane segment at 22–42 (KIKTVLAFLVVLAFAAYGFYI) threads the bilayer. Residues 43–112 (RHLTAGKYFS…ISIFGYNELE (70 aa)) lie on the Extracellular side of the membrane. The DXD motif 1 signature appears at 53-55 (DPD). D55 lines the Mn(2+) pocket. A helical membrane pass occupies residues 113 to 133 (AFLLWPPFVGFLSVIGVYLLG). At 134 to 135 (RK) the chain is on the cytoplasmic side. The chain crosses the membrane as a helical span at residues 136 to 156 (VLNEWAGMWGAIILSVLTANF). Over 157–165 (SRTFSGNAR) the chain is Extracellular. Positions 165 and 167 each coordinate Mn(2+). A DXD motif 2 motif is present at residues 165–167 (RGD). Residues 166–186 (GDGPFMMLFTFSAVLMLYYLT) form a helical membrane-spanning segment. Over 187 to 193 (EENKNKK) the chain is Cytoplasmic. Residues 194–214 (IIWGTLFVLLAGISTAAWNGS) traverse the membrane as a helical segment. A topological domain (extracellular) is located at residue P215. The chain crosses the membrane as a helical span at residues 216-236 (FGLMVLLGFASFQTIILFIFG). At 237–247 (KINELREFIKE) the chain is on the cytoplasmic side. A helical transmembrane segment spans residues 248 to 268 (YYPAYLGILAISYLLTIPGIG). K269 is a topological domain (extracellular). A helical transmembrane segment spans residues 270–290 (IGGFVRFAFEVFLGLVFLAIV). At 291-306 (MLYGGKYLNYSDKKHR) the chain is on the cytoplasmic side. A helical membrane pass occupies residues 307-327 (FAVVAVIVIAGFAGAYIYVGP). Over 328 to 360 (KLFTLMGGAYQSTQVYETVQELAKTDWGDVKVY) the chain is Extracellular. The short motif at 345-348 (TVQE) is the TIXE motif element. The helical transmembrane segment at 361–381 (YGVEKPNGIVFFLGLVGAMIV) threads the bilayer. Over 382 to 396 (TARYLYKLFKDGRRP) the chain is Cytoplasmic. Residues 397-417 (HEELFAITFYVMSIYLLWTAA) traverse the membrane as a helical segment. Residue R418 is a topological domain, extracellular. Residue R418 participates in a glycophospholipid binding. Residues 419–439 (FLFLASYAIALMSGVFAGYVL) traverse the membrane as a helical segment. Residues 440-453 (ETVEKMKESIPIKA) are Cytoplasmic-facing. A helical transmembrane segment spans residues 454-474 (ALGGVIAIMLLLIPLTHGPLL). Residues 475–967 (AQSAKSMRTT…LEVSASAPHH (493 aa)) lie on the Extracellular side of the membrane. The interacts with target acceptor peptide in protein substrate stretch occupies residues 511-513 (WWD). The WWDYG motif motif lies at 511 to 515 (WWDYG). Y516 contacts a glycophospholipid. Residues 571 to 578 (DWAKFNAI) carry the DK motif motif.

Belongs to the STT3 family. Mn(2+) is required as a cofactor. Mg(2+) serves as cofactor.

The protein localises to the cell membrane. The catalysed reaction is an archaeal dolichyl phosphooligosaccharide + [protein]-L-asparagine = an archaeal dolichyl phosphate + a glycoprotein with the oligosaccharide chain attached by N-beta-D-glycosyl linkage to a protein L-asparagine.. The protein operates within protein modification; protein glycosylation. Its function is as follows. Oligosaccharyl transferase (OST) that catalyzes the initial transfer of a defined glycan (ManNAcXyl(2)GlcAMan(2)GalNAc in P.furiosus) from the lipid carrier dolichol-monophosphate to an asparagine residue within an Asn-X-Ser/Thr consensus motif in nascent polypeptide chains, the first step in protein N-glycosylation. This chain is Dolichyl-phosphooligosaccharide-protein glycotransferase 1 (aglB1), found in Pyrococcus furiosus (strain ATCC 43587 / DSM 3638 / JCM 8422 / Vc1).